The following is a 746-amino-acid chain: Centromere protein I (746 aa).

Residues 1 to 24 (MATQRVTRNSQQQNRISQGSNSRQ) are disordered.

This sequence belongs to the CENP-I/CTF3 family. In terms of assembly, component of the CENPA-CAD complex, composed of CENPI, CENPK, CENPL, CENPO, CENPP, CENPQ, CENPR and CENPS. The CENPA-CAD complex interacts with the CENPA-NAC complex, at least composed of CENPA, CENPC, CENPH, CENPM, CENPN, CENPT and CENPU. Interacts with SENP6. Sumoylated. Sumoylated form can be polyubiquitinated by RNF4, leading to its degradation. Desumoylation by SENP6 prevents its degradation.

It is found in the nucleus. The protein resides in the chromosome. The protein localises to the centromere. Functionally, component of the CENPA-CAD (nucleosome distal) complex, a complex recruited to centromeres which is involved in assembly of kinetochore proteins, mitotic progression and chromosome segregation. May be involved in incorporation of newly synthesized CENPA into centromeres via its interaction with the CENPA-NAC complex. Required for the localization of CENPF, MAD1L1 and MAD2 (MAD2L1 or MAD2L2) to kinetochores. Involved in the response of gonadal tissues to follicle-stimulating hormone. The sequence is that of Centromere protein I (Cenpi) from Mus musculus (Mouse).